An 80-amino-acid polypeptide reads, in one-letter code: Antitoxin VapB15 (80 aa).

Residues 60 to 80 form a disordered region; the sequence is DFSNDEIESFSDTDRKLADES. Mg(2+) is bound at residue Glu67. Residue Glu67 participates in Mn(2+) binding. Residues 71 to 80 are compositionally biased toward basic and acidic residues; it reads DTDRKLADES.

In terms of assembly, forms a VapB15-VapC15(2) heterotrimer and a VapB15(2)-VapC15(2) heterotetramer; each toxin pair forms a homodimer which creates a channel in which the antitoxin binds. Mg(2+) serves as cofactor. Requires Mn(2+) as cofactor.

Functionally, antitoxin component of a type II toxin-antitoxin (TA) system. Neutralizes the toxic effect of cognate toxin VapC15. In Mycobacterium tuberculosis (strain CDC 1551 / Oshkosh), this protein is Antitoxin VapB15 (vapB15).